A 327-amino-acid polypeptide reads, in one-letter code: Aldo-keto reductase family 7 member A3 (327 aa).

A Phosphoserine modification is found at Ser-2. NADP(+) contacts are provided by Met-13, Arg-18, and Asp-40. Tyr-45 functions as the Proton donor in the catalytic mechanism. His-109 is a binding site for citrate. The NADP(+) site is built by Asn-140, Asn-194, Leu-196, Gly-198, Arg-204, and Arg-218. Positions 228 and 231 each coordinate citrate. The NADP(+) site is built by Ser-286, Gln-290, Gln-293, Asn-294, and Arg-327.

The protein belongs to the aldo/keto reductase family. Aldo/keto reductase 2 subfamily. Homodimer. Heterodimer with AKR7A2.

The protein localises to the cytoplasm. It carries out the reaction a primary alcohol + NADP(+) = an aldehyde + NADPH + H(+). The catalysed reaction is aflatoxin B1 dialdehyde + NADPH + H(+) = aflatoxin B1 C(6a)-monoaldehyde + NADP(+). It catalyses the reaction aflatoxin B1 dialdehyde + NADPH + H(+) = aflatoxin B1 C(8)-monoaldehyde + NADP(+). The enzyme catalyses aflatoxin B1 C(6a)-monoaldehyde + NADPH + 2 H(+) = aflatoxin B1 triol + NADP(+). With respect to regulation, inhibited by citrate. In terms of biological role, catalyzes the NADPH-dependent reduction of various carbonyl-containing compounds, including aldehydes, ketones, and toxic products from cellular metabolism or environmental exposure. Can reduce the dialdehyde form of aflatoxin B1 (AFB1) into alcohol derivatives, via monoaldehydes intermediates, thus preventing the formation of protein adducts that contribute to AFB1-induced toxicity. The chain is Aldo-keto reductase family 7 member A3 from Rattus norvegicus (Rat).